The sequence spans 158 residues: UPF0145 protein Psyc_1853 (158 aa).

Over residues 113 to 122 (IYQSSNQPPS) the composition is skewed to polar residues. Residues 113-158 (IYQSSNQPPSHHSGHSQYEEPVPSAAQPSTTAQANDDLPRFNPFGE) are disordered.

It belongs to the UPF0145 family.

This is UPF0145 protein Psyc_1853 from Psychrobacter arcticus (strain DSM 17307 / VKM B-2377 / 273-4).